Reading from the N-terminus, the 466-residue chain is tRNA modification GTPase MnmE (466 aa).

Arginine 22, glutamate 87, and arginine 126 together coordinate (6S)-5-formyl-5,6,7,8-tetrahydrofolate. Residues 222–382 (GWRTVIVGRP…LTELIRRMVY (161 aa)) form the TrmE-type G domain. Asparagine 232 serves as a coordination point for K(+). GTP is bound by residues 232–237 (NVGKSS), 251–257 (TEIPGTT), and 276–279 (DTAG). Position 236 (serine 236) interacts with Mg(2+). Positions 251, 253, and 256 each coordinate K(+). Threonine 257 is a binding site for Mg(2+). Residue lysine 466 participates in (6S)-5-formyl-5,6,7,8-tetrahydrofolate binding.

Belongs to the TRAFAC class TrmE-Era-EngA-EngB-Septin-like GTPase superfamily. TrmE GTPase family. As to quaternary structure, homodimer. Heterotetramer of two MnmE and two MnmG subunits. Requires K(+) as cofactor.

It localises to the cytoplasm. Exhibits a very high intrinsic GTPase hydrolysis rate. Involved in the addition of a carboxymethylaminomethyl (cmnm) group at the wobble position (U34) of certain tRNAs, forming tRNA-cmnm(5)s(2)U34. This Heliobacterium modesticaldum (strain ATCC 51547 / Ice1) protein is tRNA modification GTPase MnmE.